Reading from the N-terminus, the 287-residue chain is Phosphatidylglycerol--prolipoprotein diacylglyceryl transferase (287 aa).

The next 4 helical transmembrane spans lie at 26 to 46 (VAIR…WWLA), 71 to 91 (FLVW…ILFY), 106 to 126 (IWRG…AMIV), and 132 to 152 (GLPV…GLFF). An a 1,2-diacyl-sn-glycero-3-phospho-(1'-sn-glycerol)-binding site is contributed by R154. The next 3 helical transmembrane spans lie at 187–207 (SQLY…QVLA), 217–237 (GVIS…VEFF), and 251–271 (WLTM…WAIW).

Belongs to the Lgt family.

Its subcellular location is the cell inner membrane. It catalyses the reaction L-cysteinyl-[prolipoprotein] + a 1,2-diacyl-sn-glycero-3-phospho-(1'-sn-glycerol) = an S-1,2-diacyl-sn-glyceryl-L-cysteinyl-[prolipoprotein] + sn-glycerol 1-phosphate + H(+). It functions in the pathway protein modification; lipoprotein biosynthesis (diacylglyceryl transfer). Functionally, catalyzes the transfer of the diacylglyceryl group from phosphatidylglycerol to the sulfhydryl group of the N-terminal cysteine of a prolipoprotein, the first step in the formation of mature lipoproteins. The polypeptide is Phosphatidylglycerol--prolipoprotein diacylglyceryl transferase (Allorhizobium ampelinum (strain ATCC BAA-846 / DSM 112012 / S4) (Agrobacterium vitis (strain S4))).